We begin with the raw amino-acid sequence, 333 residues long: Fructose-1,6-bisphosphatase class 1 (333 aa).

Positions 90, 112, 114, and 115 each coordinate Mg(2+). Substrate contacts are provided by residues 115–118, N207, and K273; that span reads DGSS. E279 contacts Mg(2+).

The protein belongs to the FBPase class 1 family. Homotetramer. Mg(2+) serves as cofactor.

The protein resides in the cytoplasm. It catalyses the reaction beta-D-fructose 1,6-bisphosphate + H2O = beta-D-fructose 6-phosphate + phosphate. It participates in carbohydrate biosynthesis; gluconeogenesis. In Aromatoleum aromaticum (strain DSM 19018 / LMG 30748 / EbN1) (Azoarcus sp. (strain EbN1)), this protein is Fructose-1,6-bisphosphatase class 1.